Consider the following 139-residue polypeptide: Protein 2.8 (139 aa).

The polypeptide is Protein 2.8 (Escherichia phage T7 (Bacteriophage T7)).